The chain runs to 420 residues: Disease resistance protein CHS1 (420 aa).

Residues 12–167 (RELDVFLSFS…QIADDIRLMF (156 aa)) form the TIR domain. Glutamate 86 is an active-site residue. The NB-ARC domain maps to 185–406 (MKALYALLAL…KDIKEVWKIM (222 aa)).

As to expression, mostly expressed in leaves and flowers (mainly in sepals), and, at a lower intensity, in stems. Present at low levels in roots and seeds.

The protein resides in the cytoplasm. The protein localises to the nucleus. The catalysed reaction is NAD(+) + H2O = ADP-D-ribose + nicotinamide + H(+). Its function is as follows. Confers resistance to low temperatures by limiting chloroplast damage and cell death, thus maintaining growth homeostasis. Regulates steryl-esters and sterols accumulation. Limits leaf necrosis associated with virulent bacterial infection (e.g. Pseudomonas syringae pv. tomato DC3000). This Arabidopsis thaliana (Mouse-ear cress) protein is Disease resistance protein CHS1.